A 418-amino-acid polypeptide reads, in one-letter code: Tyrosine--tRNA ligase 1 (418 aa).

Tyr-34 serves as a coordination point for L-tyrosine. The 'HIGH' region motif lies at 39-48; that stretch reads PTADSLHLGH. Tyr-169 and Gln-173 together coordinate L-tyrosine. A 'KMSKS' region motif is present at residues 229–233; that stretch reads KFGKS. Lys-232 contacts ATP. The region spanning 352–418 is the S4 RNA-binding domain; that stretch reads LNIVELLVNA…GKKKNFVLTY (67 aa).

This sequence belongs to the class-I aminoacyl-tRNA synthetase family. TyrS type 1 subfamily. In terms of assembly, homodimer.

Its subcellular location is the cytoplasm. It catalyses the reaction tRNA(Tyr) + L-tyrosine + ATP = L-tyrosyl-tRNA(Tyr) + AMP + diphosphate + H(+). Its function is as follows. Catalyzes the attachment of tyrosine to tRNA(Tyr) in a two-step reaction: tyrosine is first activated by ATP to form Tyr-AMP and then transferred to the acceptor end of tRNA(Tyr). The polypeptide is Tyrosine--tRNA ligase 1 (Streptococcus thermophilus (strain CNRZ 1066)).